The chain runs to 139 residues: Large ribosomal subunit protein bL17 (139 aa).

The protein belongs to the bacterial ribosomal protein bL17 family. In terms of assembly, part of the 50S ribosomal subunit. Contacts protein L32.

This is Large ribosomal subunit protein bL17 from Cereibacter sphaeroides (strain ATCC 17029 / ATH 2.4.9) (Rhodobacter sphaeroides).